A 152-amino-acid chain; its full sequence is Regulatory protein RecX (152 aa).

Belongs to the RecX family.

It localises to the cytoplasm. Modulates RecA activity. This is Regulatory protein RecX from Haemophilus influenzae (strain 86-028NP).